The chain runs to 314 residues: Glycerol-3-phosphate dehydrogenase [NAD(P)+] (314 aa).

Phe11, Arg30, and Lys96 together coordinate NADPH. Sn-glycerol 3-phosphate contacts are provided by Lys96, Gly124, and Ser126. Ala128 is an NADPH binding site. Sn-glycerol 3-phosphate contacts are provided by Lys179, Asp232, Ser242, Arg243, and Asn244. The Proton acceptor role is filled by Lys179. An NADPH-binding site is contributed by Arg243. Residue Glu264 participates in NADPH binding.

Belongs to the NAD-dependent glycerol-3-phosphate dehydrogenase family.

The protein localises to the cytoplasm. It carries out the reaction sn-glycerol 3-phosphate + NAD(+) = dihydroxyacetone phosphate + NADH + H(+). The catalysed reaction is sn-glycerol 3-phosphate + NADP(+) = dihydroxyacetone phosphate + NADPH + H(+). Its pathway is membrane lipid metabolism; glycerophospholipid metabolism. In terms of biological role, catalyzes the reduction of the glycolytic intermediate dihydroxyacetone phosphate (DHAP) to sn-glycerol 3-phosphate (G3P), the key precursor for phospholipid synthesis. The chain is Glycerol-3-phosphate dehydrogenase [NAD(P)+] from Paracoccus denitrificans (strain Pd 1222).